Reading from the N-terminus, the 445-residue chain is SVP1-like protein 2 (445 aa).

2 WD repeats span residues 218–258 (AHKA…LLKE) and 263–302 (LDRA…EGTL). The tract at residues 301 to 321 (TLNPANPEDHQSSGSNGHIKA) is disordered. Over residues 312-321 (SSGSNGHIKA) the composition is skewed to polar residues.

Belongs to the WD repeat PROPPIN family.

The protein resides in the vacuole membrane. Its subcellular location is the cytoplasmic vesicle membrane. In terms of biological role, involved in mitochondrial or peroxisomal functions and amino acid signaling pathways. This Candida glabrata (strain ATCC 2001 / BCRC 20586 / JCM 3761 / NBRC 0622 / NRRL Y-65 / CBS 138) (Yeast) protein is SVP1-like protein 2 (HSV2).